The sequence spans 400 residues: Argininosuccinate synthase (400 aa).

Residues 10-18 and alanine 38 contribute to the ATP site; that span reads AYSGGVDTS. Tyrosine 89 provides a ligand contact to L-citrulline. Residue glycine 119 participates in ATP binding. Positions 121, 125, and 126 each coordinate L-aspartate. Residue asparagine 125 participates in L-citrulline binding. Arginine 129, serine 177, serine 186, glutamate 262, and tyrosine 274 together coordinate L-citrulline.

The protein belongs to the argininosuccinate synthase family. Type 1 subfamily. Homotetramer.

The protein localises to the cytoplasm. The catalysed reaction is L-citrulline + L-aspartate + ATP = 2-(N(omega)-L-arginino)succinate + AMP + diphosphate + H(+). It participates in amino-acid biosynthesis; L-arginine biosynthesis; L-arginine from L-ornithine and carbamoyl phosphate: step 2/3. The sequence is that of Argininosuccinate synthase from Nostoc sp. (strain PCC 7120 / SAG 25.82 / UTEX 2576).